The sequence spans 95 residues: Cytochrome b-c1 complex subunit 8, mitochondrial (95 aa).

Residues 57 to 74 (FLYVAIPFVVVWSIWTRA) form a helical membrane-spanning segment.

Belongs to the UQCRQ/QCR8 family. In terms of assembly, component of the ubiquinol-cytochrome c oxidoreductase (cytochrome b-c1 complex, complex III, CIII), a multisubunit enzyme composed of 10 subunits. The complex is composed of 3 respiratory subunits cytochrome b (COB), cytochrome c1 (CYT1) and Rieske protein (RIP1), 2 core protein subunits COR1 and QCR2, and 5 low-molecular weight protein subunits QCR6, QCR7, QCR8, QCR9 and QCR10. The complex exists as an obligatory dimer and forms supercomplexes (SCs) in the inner mitochondrial membrane with a monomer or a dimer of cytochrome c oxidase (complex IV, CIV), resulting in 2 different assemblies (supercomplexes III(2)IV and III(2)IV(2)).

Its subcellular location is the membrane. It is found in the mitochondrion inner membrane. In terms of biological role, component of the ubiquinol-cytochrome c oxidoreductase, a multisubunit transmembrane complex that is part of the mitochondrial electron transport chain which drives oxidative phosphorylation. The complex plays an important role in the uptake of multiple carbon sources present in different host niches. The sequence is that of Cytochrome b-c1 complex subunit 8, mitochondrial from Candida albicans (strain SC5314 / ATCC MYA-2876) (Yeast).